A 152-amino-acid polypeptide reads, in one-letter code: Methylglyoxal synthase (152 aa).

The MGS-like domain occupies 6 to 152 (RTLATEKNIA…YEGYLKERLK (147 aa)). Substrate is bound by residues His19, Lys23, 45-48 (TGTT), and 65-66 (SG). The Proton donor/acceptor role is filled by Asp71. A substrate-binding site is contributed by His98.

It belongs to the methylglyoxal synthase family.

The catalysed reaction is dihydroxyacetone phosphate = methylglyoxal + phosphate. Functionally, catalyzes the formation of methylglyoxal from dihydroxyacetone phosphate. The polypeptide is Methylglyoxal synthase (Proteus mirabilis (strain HI4320)).